A 399-amino-acid chain; its full sequence is Glutathione S-transferase LANCL1 (399 aa).

N-acetylalanine is present on Ala2. The residue at position 142 (Lys142) is an N6-acetyllysine. Cys276 serves as a coordination point for Zn(2+). Residue Lys317 coordinates glutathione. Cys322 and His323 together coordinate Zn(2+). Position 364-367 (364-367) interacts with glutathione; sequence RTPD.

It belongs to the LanC-like protein family. In terms of assembly, interacts with the C-terminal of STOM. Interacts with the EPS8 SH3 domain. Interaction with EPS8 is inhibited by glutathione binding. Strongly expressed in the brain, testis and skeletal muscle. Expressed in the neurons of the cerebellum, the germinal cells of the seminiferous tubules in testis, in liver hepoatocytes and in cardiac myocytes.

The protein resides in the cytoplasm. Its subcellular location is the cell membrane. It catalyses the reaction RX + glutathione = an S-substituted glutathione + a halide anion + H(+). The enzyme catalyses 1-chloro-2,4-dinitrobenzene + glutathione = 2,4-dinitrophenyl-S-glutathione + chloride + H(+). Its function is as follows. Functions as a glutathione transferase. Catalyzes conjugation of the glutathione (GSH) to artificial substrates 1-chloro-2,4-dinitrobenzene (CDNB) and p-nitrophenyl acetate. Mitigates neuronal oxidative stress during normal postnatal development and in response to oxidative stresses probably through GSH antioxidant defense mechanism. May play a role in EPS8 signaling. Binds glutathione. This Rattus norvegicus (Rat) protein is Glutathione S-transferase LANCL1.